The following is a 289-amino-acid chain: ATP synthase gamma chain (289 aa).

The protein belongs to the ATPase gamma chain family. In terms of assembly, F-type ATPases have 2 components, CF(1) - the catalytic core - and CF(0) - the membrane proton channel. CF(1) has five subunits: alpha(3), beta(3), gamma(1), delta(1), epsilon(1). CF(0) has three main subunits: a, b and c.

The protein resides in the cell inner membrane. Its function is as follows. Produces ATP from ADP in the presence of a proton gradient across the membrane. The gamma chain is believed to be important in regulating ATPase activity and the flow of protons through the CF(0) complex. The chain is ATP synthase gamma chain from Polynucleobacter necessarius subsp. necessarius (strain STIR1).